The chain runs to 275 residues: Secreted RxLR effector protein 153 (275 aa).

Positions 1 to 27 are cleaved as a signal peptide; sequence MRNRAFLFGLFFIEYACLVLFAAPTRA. Asn-45 carries N-linked (GlcNAc...) asparagine glycosylation. Positions 48–63 match the RxLR-dEER motif; sequence RTLQADDSKRISAEER.

It belongs to the RxLR effector family.

Its subcellular location is the secreted. It localises to the host cell membrane. Secreted effector that completely suppresses the host cell death induced by cell death-inducing proteins. This is Secreted RxLR effector protein 153 from Plasmopara viticola (Downy mildew of grapevine).